Here is a 319-residue protein sequence, read N- to C-terminus: Cutinase cut1 (319 aa).

An N-terminal signal peptide occupies residues 1–58 (MPPHAARPGPAQNRRGRAMAVITPRRERSSLLSRALRFTAAAATALVTAVSLAAPAHA). Y118 serves as a coordination point for poly(ethylene terephthalate). Residue S188 is the Nucleophile of the active site. The poly(ethylene terephthalate) site is built by M189 and W213. Catalysis depends on charge relay system residues D234 and H266. C299 and C317 form a disulfide bridge.

The protein belongs to the AB hydrolase superfamily.

The protein resides in the secreted. It localises to the periplasm. The catalysed reaction is an acetyl ester + H2O = an aliphatic alcohol + acetate + H(+). It catalyses the reaction a butanoate ester + H2O = an aliphatic alcohol + butanoate + H(+). The enzyme catalyses pentanoate ester + H2O = pentanoate + an aliphatic alcohol + H(+). It carries out the reaction an octanoate ester + H2O = an aliphatic alcohol + octanoate + H(+). The catalysed reaction is decanoate ester + H2O = decanoate + an aliphatic alcohol + H(+). It catalyses the reaction a dodecanoate ester + H2O = an aliphatic alcohol + dodecanoate + H(+). The enzyme catalyses a tetradecanoate ester + H2O = an aliphatic alcohol + tetradecanoate + H(+). It carries out the reaction hexadecanoate ester + H2O = an aliphatic alcohol + hexadecanoate + H(+). The catalysed reaction is cutin + H2O = cutin monomers.. It catalyses the reaction (ethylene terephthalate)(n) + H2O = (ethylene terephthalate)(n-1) + 4-[(2-hydroxyethoxy)carbonyl]benzoate + H(+). Its activity is regulated as follows. Activated by magnesium ions. Activated by calcium ions. Functionally, catalyzes the hydrolysis of cutin, a polyester that forms the structure of plant cuticle. Shows esterase activity towards p-nitrophenol-linked aliphatic esters (pNP-aliphatic esters). Capable of degrading the plastic poly(ethylene terephthalate) (PET), the most abundant polyester plastic in the world. The protein is Cutinase cut1 of Thermobifida fusca (Thermomonospora fusca).